Consider the following 421-residue polypeptide: NADH-quinone oxidoreductase subunit F (421 aa).

The interval 1–25 is disordered; that stretch reads MLKEEDKIFTNLHGQQSHDLKSSKK. Residues 16–25 show a composition bias toward basic and acidic residues; that stretch reads QSHDLKSSKK. Position 54 to 63 (54 to 63) interacts with NAD(+); sequence GRGGAGFSTG. Position 166–213 (166–213) interacts with FMN; the sequence is GAGAYICGEETALLESLEGKKGMPRLKPPFPAGFGLYGCPTTINNVES. Cys-344, Cys-347, Cys-350, and Cys-390 together coordinate [4Fe-4S] cluster.

Belongs to the complex I 51 kDa subunit family. FMN serves as cofactor. Requires [4Fe-4S] cluster as cofactor.

It carries out the reaction a quinone + NADH + 5 H(+)(in) = a quinol + NAD(+) + 4 H(+)(out). NDH-1 shuttles electrons from NADH, via FMN and iron-sulfur (Fe-S) centers, to quinones in the respiratory chain. Couples the redox reaction to proton translocation (for every two electrons transferred, four hydrogen ions are translocated across the cytoplasmic membrane), and thus conserves the redox energy in a proton gradient. The sequence is that of NADH-quinone oxidoreductase subunit F (nuoF) from Rickettsia massiliae (strain Mtu5).